Here is a 115-residue protein sequence, read N- to C-terminus: MAGRSGDSDEELLKTVRLIKFLYQSNPPPSSEGTRQARRNRRRRWRERQRHIRSISAWILSNYLGRPAEPVPLQLPPQRLTLDCSEDCGTSGTQGVGSPQILVESPTVLESGTKE.

Phosphoserine; by host CK2 occurs at positions 5 and 8. Positions 18 to 26 (LIKFLYQSN) are homomultimerization. The segment at 23-48 (YQSNPPPSSEGTRQARRNRRRRWRER) is disordered. The Nuclear localization signal and RNA-binding (RRE) motif lies at 34–50 (TRQARRNRRRRWRERQR). Residues 36–48 (QARRNRRRRWRER) show a composition bias toward basic residues. The Nuclear export signal and binding to XPO1 signature appears at 73–83 (LQLPPQRLTLD). Residues 89 to 115 (GTSGTQGVGSPQILVESPTVLESGTKE) are disordered. Phosphoserine; by host is present on residues Ser-91 and Ser-98.

Belongs to the HIV-1 REV protein family. Homomultimer; when bound to the RRE. Multimeric assembly is essential for activity and may involve XPO1. Binds to human KPNB1, XPO1, TNPO1, RANBP5 and IPO7. Interacts with the viral Integrase. Interacts with human KHDRBS1. Interacts with human NAP1; this interaction decreases Rev multimerization and stimulates its activity. Interacts with human DEAD-box helicases DDX3 and DDX24; these interactions may serve for viral RNA export to the cytoplasm and packaging, respectively. Interacts with human PSIP1; this interaction may inhibit HIV-1 DNA integration by promoting dissociation of the Integrase-LEDGF/p75 complex. In terms of processing, asymmetrically arginine dimethylated at one site by host PRMT6. Methylation impairs the RNA-binding activity and export of viral RNA from the nucleus to the cytoplasm. Post-translationally, phosphorylated by protein kinase CK2. Presence of, and maybe binding to the N-terminus of the regulatory beta subunit of CK2 is necessary for CK2-mediated Rev's phosphorylation.

Its subcellular location is the host nucleus. It localises to the host nucleolus. The protein resides in the host cytoplasm. Its function is as follows. Escorts unspliced or incompletely spliced viral pre-mRNAs (late transcripts) out of the nucleus of infected cells. These pre-mRNAs carry a recognition sequence called Rev responsive element (RRE) located in the env gene, that is not present in fully spliced viral mRNAs (early transcripts). This function is essential since most viral proteins are translated from unspliced or partially spliced pre-mRNAs which cannot exit the nucleus by the pathway used by fully processed cellular mRNAs. Rev itself is translated from a fully spliced mRNA that readily exits the nucleus. Rev's nuclear localization signal (NLS) binds directly to KPNB1/Importin beta-1 without previous binding to KPNA1/Importin alpha-1. KPNB1 binds to the GDP bound form of RAN (Ran-GDP) and targets Rev to the nucleus. In the nucleus, the conversion from Ran-GDP to Ran-GTP dissociates Rev from KPNB1 and allows Rev's binding to the RRE in viral pre-mRNAs. Rev multimerization on the RRE via cooperative assembly exposes its nuclear export signal (NES) to the surface. Rev can then form a complex with XPO1/CRM1 and Ran-GTP, leading to nuclear export of the complex. Conversion from Ran-GTP to Ran-GDP mediates dissociation of the Rev/RRE/XPO1/RAN complex, so that Rev can return to the nucleus for a subsequent round of export. Beside KPNB1, also seems to interact with TNPO1/Transportin-1, RANBP5/IPO5 and IPO7/RANBP7 for nuclear import. The nucleoporin-like HRB/RIP is an essential cofactor that probably indirectly interacts with Rev to release HIV RNAs from the perinuclear region to the cytoplasm. This chain is Protein Rev, found in Human immunodeficiency virus type 1 group M subtype B (isolate MN) (HIV-1).